A 463-amino-acid polypeptide reads, in one-letter code: MMPDMIKDPFARLGLDREVLTVSQLNGRARVLLEDVFSSIWVEGEISNLSRPASGHVYFTLKDSGAQVRCALFRQSAARVRQALKDGLQVKVRGKVSLFEGRGDYQLILDTVEPAGDGALRLAFDALKAKLSDEGLFSAERKVALPLHPQRIGIISSPTGAVIRDIISVFRRRAPRVELTLIPTAVQGREAINQIVRALKLADSRGFDALILARGGGSLEDLWCFNEEAVARAIDACVTPIVSAVGHETDVSISDFVADVRAPTPSAAAELLAPDSSDLHRRVDNLHRRLVSRMQDRLMRERLRLEGISRRLRHPGERLRQQSQRLDDLDMRLRRALEQTMHQRQLRLAHMQSRLAAQHPGRTLAFLRQRLDALAERLPRAIREQIKARKLQLQSQVQTLNVVSPLATLGRGYSILLDERGHAIRNAAQTQTGQRLTARLGEGELHVRVEDNHLTPVTLSLLD.

It belongs to the XseA family. Heterooligomer composed of large and small subunits.

The protein localises to the cytoplasm. It catalyses the reaction Exonucleolytic cleavage in either 5'- to 3'- or 3'- to 5'-direction to yield nucleoside 5'-phosphates.. Bidirectionally degrades single-stranded DNA into large acid-insoluble oligonucleotides, which are then degraded further into small acid-soluble oligonucleotides. In Pseudomonas syringae pv. syringae (strain B728a), this protein is Exodeoxyribonuclease 7 large subunit.